The chain runs to 357 residues: Dual-specificity RNA methyltransferase RlmN (357 aa).

E89 serves as the catalytic Proton acceptor. Residues 109–340 enclose the Radical SAM core domain; it reads EGEKYTVCVS…CTIRESKALD (232 aa). Cysteines 116 and 345 form a disulfide. Residues C123, C127, and C130 each contribute to the [4Fe-4S] cluster site. S-adenosyl-L-methionine-binding positions include 173 to 174, S203, 226 to 228, and N302; these read GE and SLH. Catalysis depends on C345, which acts as the S-methylcysteine intermediate.

The protein belongs to the radical SAM superfamily. RlmN family. [4Fe-4S] cluster is required as a cofactor.

It is found in the cytoplasm. The catalysed reaction is adenosine(2503) in 23S rRNA + 2 reduced [2Fe-2S]-[ferredoxin] + 2 S-adenosyl-L-methionine = 2-methyladenosine(2503) in 23S rRNA + 5'-deoxyadenosine + L-methionine + 2 oxidized [2Fe-2S]-[ferredoxin] + S-adenosyl-L-homocysteine. The enzyme catalyses adenosine(37) in tRNA + 2 reduced [2Fe-2S]-[ferredoxin] + 2 S-adenosyl-L-methionine = 2-methyladenosine(37) in tRNA + 5'-deoxyadenosine + L-methionine + 2 oxidized [2Fe-2S]-[ferredoxin] + S-adenosyl-L-homocysteine. Functionally, specifically methylates position 2 of adenine 2503 in 23S rRNA and position 2 of adenine 37 in tRNAs. m2A2503 modification seems to play a crucial role in the proofreading step occurring at the peptidyl transferase center and thus would serve to optimize ribosomal fidelity. The chain is Dual-specificity RNA methyltransferase RlmN from Helicobacter pylori (strain HPAG1).